A 347-amino-acid polypeptide reads, in one-letter code: Calcium homeostasis modulator protein 3 (347 aa).

Topologically, residues 1–20 (MDRFRMLFQHLQSSSESVMN) are cytoplasmic. The tract at residues 9 to 36 (QHLQSSSESVMNGICLLLAAVTVKIYSS) is central pore. The chain crosses the membrane as a helical span at residues 21–36 (GICLLLAAVTVKIYSS). The Extracellular segment spans residues 37–48 (LDFNCPCLERYN). Disulfide bonds link cysteine 41–cysteine 126 and cysteine 43–cysteine 157. A helical membrane pass occupies residues 49–71 (ALYGLGLLLTPPLALFLCGLLVN). At 72 to 98 (RQSVLMVEEWRRPAGHRRKDLGIIRYM) the chain is on the cytoplasmic side. Cysteine 99 carries S-palmitoyl cysteine lipidation. The helical transmembrane segment at 99-124 (CSSVLQRALAAPLVWILLALLDGKCF) threads the bilayer. At 125 to 176 (VCAFSNSVDPEKFLDFANMTPRQVQLFLAKVPCKEDELVKNSPARKAVSRYL) the chain is on the extracellular side. A glycan (N-linked (GlcNAc...) asparagine) is linked at asparagine 142. The helical transmembrane segment at 177 to 202 (RCLSQAIGWSITLLVIVVAFLARCLR) threads the bilayer. Residues cysteine 200 and cysteine 204 are each lipidated (S-palmitoyl cysteine). Over 203 to 347 (PCFDQTVFLQ…GTKLCHQLNV (145 aa)) the chain is Cytoplasmic. Residues 265–290 (GGIPESQESSEPPELREDRDSGNGKA) are disordered. Positions 277-286 (PELREDRDSG) are enriched in basic and acidic residues.

Belongs to the CALHM family. Associates with CALHM1 as a pore-forming subunit in a hetero-hexameric channel complex. In terms of processing, N-glycosylated. Palmitoylated by ZDHHC3 and ZDHHC15. Palmitoylation positively regulates CALHM1:CALHM3 channel conductance. Expressed in taste bud cells.

Its subcellular location is the basolateral cell membrane. The enzyme catalyses ATP(in) = ATP(out). It carries out the reaction Ca(2+)(in) = Ca(2+)(out). The catalysed reaction is Na(+)(in) = Na(+)(out). It catalyses the reaction K(+)(in) = K(+)(out). The enzyme catalyses chloride(in) = chloride(out). Pore-forming subunit of gustatory voltage-gated ion channels required for sensory perception of sweet, bitter and umami tastes. With CALHM1 forms a fast-activating voltage-gated ATP-release channel in type II taste bud cells, ATP acting as a neurotransmitter to activate afferent neural gustatory pathways. Acts both as a voltage-gated and calcium-activated ion channel: mediates neuronal excitability in response to membrane depolarization and low extracellular Ca(2+) concentration. Has poor ion selectivity and forms a wide pore (around 14 Angstroms) that mediates permeation of small ions including Ca(2+), Na(+), K(+) and Cl(-), as well as larger ions such as ATP(4-). In Mus musculus (Mouse), this protein is Calcium homeostasis modulator protein 3.